The following is a 396-amino-acid chain: S-adenosylmethionine synthase (396 aa).

His16 is an ATP binding site. Asp18 contacts Mg(2+). Residue Glu44 participates in K(+) binding. Glu57 and Gln100 together coordinate L-methionine. The interval 100–110 is flexible loop; sequence QSPDINQGVDR. ATP contacts are provided by residues 165–167, Asp240, 246–247, Ala263, and Lys267; these read DAK and RK. Asp240 contributes to the L-methionine binding site. Lys271 contacts L-methionine.

It belongs to the AdoMet synthase family. In terms of assembly, homotetramer; dimer of dimers. Mg(2+) is required as a cofactor. K(+) serves as cofactor.

The protein localises to the cytoplasm. It catalyses the reaction L-methionine + ATP + H2O = S-adenosyl-L-methionine + phosphate + diphosphate. It participates in amino-acid biosynthesis; S-adenosyl-L-methionine biosynthesis; S-adenosyl-L-methionine from L-methionine: step 1/1. In terms of biological role, catalyzes the formation of S-adenosylmethionine (AdoMet) from methionine and ATP. The overall synthetic reaction is composed of two sequential steps, AdoMet formation and the subsequent tripolyphosphate hydrolysis which occurs prior to release of AdoMet from the enzyme. This chain is S-adenosylmethionine synthase, found in Pseudomonas fluorescens (strain Pf0-1).